The primary structure comprises 308 residues: GMP synthase [glutamine-hydrolyzing] subunit B (308 aa).

In terms of domain architecture, GMPS ATP-PPase spans 1–185 (MNWEKFVEEK…LGLPEKIYNR (185 aa)). An ATP-binding site is contributed by 28-34 (SGGVDSS).

In terms of assembly, heterodimer composed of a glutamine amidotransferase subunit (A) and a GMP-binding subunit (B).

The enzyme catalyses XMP + L-glutamine + ATP + H2O = GMP + L-glutamate + AMP + diphosphate + 2 H(+). It functions in the pathway purine metabolism; GMP biosynthesis; GMP from XMP (L-Gln route): step 1/1. Its function is as follows. Catalyzes the synthesis of GMP from XMP. The polypeptide is GMP synthase [glutamine-hydrolyzing] subunit B (guaAB) (Pyrococcus abyssi (strain GE5 / Orsay)).